The chain runs to 220 residues: LHFPL tetraspan subfamily member 1 protein (220 aa).

A signal peptide spans 1-20 (MRSSLTMVGTLWAFLSLVTA). The next 2 helical transmembrane spans lie at 86–106 (VVTGAGCALLLLVALAAVLGC) and 122–142 (AAQFVGGLLISSGCALYPLGW). Asn153 carries an N-linked (GlcNAc...) asparagine glycan. A helical transmembrane segment spans residues 165 to 185 (LGWAYYCAGGGAAAAMLICTW).

This sequence belongs to the LHFP family. In terms of tissue distribution, widely expressed. Expressed at high levels in lung, thymus, skeletal muscle, colon and ovary.

The protein resides in the membrane. In Homo sapiens (Human), this protein is LHFPL tetraspan subfamily member 1 protein.